The primary structure comprises 135 residues: MYPEQLVAPMKAELANAGFTELTTPEAVEAFMKKPGTSMIVINSVCGCAAGTARPGVRKSLEHSKLPAHLGTVFAGVDKEAVNKAREYTLPYPPSSPAIAVFKDGNLVHFVERHHIEGRSADMIATHLKMVYDEL.

This sequence belongs to the bacilliredoxin family.

The sequence is that of Bacilliredoxin CHU_0972 from Cytophaga hutchinsonii (strain ATCC 33406 / DSM 1761 / CIP 103989 / NBRC 15051 / NCIMB 9469 / D465).